Reading from the N-terminus, the 253-residue chain is MFNNYGNVMMTDQFRKVEQYSPKSSPRAGGAGGRSPVVARQDSSGTLKTTIQLGKNPSIVHSGPFYLMKEPPGEGELTGATNLMAHYGLEHSYSKFSGKKVKEQLSSFLPNLPGVIDGPGHLDNSSLRSVIEKPPIGGKDLLPLTSVQLAGFRLHPGPLPEQYKHLKSVPTRKHKNKHKKHKYKEGVAPLSEQSALEASGLDTHEKKHKKQKRHEDDKERKKRKKEKKRKKQRHSPEHPGSGAASMPPQTQVF.

2 disordered regions span residues 18-49 (EQYSPKSSPRAGGAGGRSPVVARQDSSGTLKT) and 157-253 (GPLP…TQVF). A compositionally biased stretch (low complexity) spans 21–40 (SPKSSPRAGGAGGRSPVVAR). 2 stretches are compositionally biased toward basic residues: residues 165-183 (HLKSVPTRKHKNKHKKHKY) and 220-233 (RKKRKKEKKRKKQR).

It belongs to the Mediator complex subunit 19 family. In terms of assembly, component of the Mediator complex.

The protein localises to the nucleus. In terms of biological role, component of the Mediator complex, a coactivator involved in the regulated transcription of nearly all RNA polymerase II-dependent genes. Mediator functions as a bridge to convey information from gene-specific regulatory proteins to the basal RNA polymerase II transcription machinery. Mediator is recruited to promoters by direct interactions with regulatory proteins and serves as a scaffold for the assembly of a functional preinitiation complex with RNA polymerase II and the general transcription factors. The protein is Mediator of RNA polymerase II transcription subunit 19 (MED19) of Aedes aegypti (Yellowfever mosquito).